A 171-amino-acid polypeptide reads, in one-letter code: Adenine phosphoribosyltransferase (171 aa).

It belongs to the purine/pyrimidine phosphoribosyltransferase family. In terms of assembly, homodimer.

The protein resides in the cytoplasm. It catalyses the reaction AMP + diphosphate = 5-phospho-alpha-D-ribose 1-diphosphate + adenine. It functions in the pathway purine metabolism; AMP biosynthesis via salvage pathway; AMP from adenine: step 1/1. In terms of biological role, catalyzes a salvage reaction resulting in the formation of AMP, that is energically less costly than de novo synthesis. The sequence is that of Adenine phosphoribosyltransferase from Syntrophotalea carbinolica (strain DSM 2380 / NBRC 103641 / GraBd1) (Pelobacter carbinolicus).